The chain runs to 156 residues: Small ribosomal subunit protein uS7 (156 aa).

Belongs to the universal ribosomal protein uS7 family. In terms of assembly, part of the 30S ribosomal subunit. Contacts proteins S9 and S11.

In terms of biological role, one of the primary rRNA binding proteins, it binds directly to 16S rRNA where it nucleates assembly of the head domain of the 30S subunit. Is located at the subunit interface close to the decoding center, probably blocks exit of the E-site tRNA. The protein is Small ribosomal subunit protein uS7 of Lactobacillus delbrueckii subsp. bulgaricus (strain ATCC 11842 / DSM 20081 / BCRC 10696 / JCM 1002 / NBRC 13953 / NCIMB 11778 / NCTC 12712 / WDCM 00102 / Lb 14).